The chain runs to 239 residues: Ribonuclease Le2 (239 aa).

5 disulfides stabilise this stretch: Cys-5–Cys-22, Cys-13–Cys-58, Cys-21–Cys-126, Cys-66–Cys-118, and Cys-191–Cys-225. Active-site residues include His-51, Glu-111, and His-115.

It belongs to the RNase T2 family.

It carries out the reaction a ribonucleotidyl-ribonucleotide-RNA + H2O = a 3'-end 3'-phospho-ribonucleotide-RNA + a 5'-end dephospho-ribonucleoside-RNA + H(+). This is a base non-specific and adenylic acid preferential ribonuclease. In Lentinula edodes (Shiitake mushroom), this protein is Ribonuclease Le2.